The following is a 777-amino-acid chain: Elongation factor G, mitochondrial (777 aa).

Residues 34-338 (LRQRNVGISA…GMCAYLPNPM (305 aa)) form the tr-type G domain. GTP is bound by residues 43–50 (AHIDSGKT), 136–140 (DTPGH), and 190–193 (NKMD).

It belongs to the TRAFAC class translation factor GTPase superfamily. Classic translation factor GTPase family. EF-G/EF-2 subfamily.

The protein localises to the mitochondrion. It functions in the pathway protein biosynthesis; polypeptide chain elongation. Its function is as follows. Mitochondrial GTPase that catalyzes the GTP-dependent ribosomal translocation step during translation elongation. During this step, the ribosome changes from the pre-translocational (PRE) to the post-translocational (POST) state as the newly formed A-site-bound peptidyl-tRNA and P-site-bound deacylated tRNA move to the P and E sites, respectively. Catalyzes the coordinated movement of the two tRNA molecules, the mRNA and conformational changes in the ribosome. This is Elongation factor G, mitochondrial from Malassezia globosa (strain ATCC MYA-4612 / CBS 7966) (Dandruff-associated fungus).